Reading from the N-terminus, the 553-residue chain is Transcription factor GAMYB (553 aa).

Residues 1-17 (MYRVKSESDCDMIHQEQ) are compositionally biased toward basic and acidic residues. The interval 1–45 (MYRVKSESDCDMIHQEQMDSPVADDGSSGGSPHRGGGPPLKKGPW) is disordered. Gly residues predominate over residues 27–38 (SSGGSPHRGGGP). 2 HTH myb-type domains span residues 37–89 (GPPL…ANHL) and 90–144 (RPNL…KRCQ). 2 consecutive DNA-binding regions (H-T-H motif) follow at residues 65-89 (WNAV…ANHL) and 117-140 (WARM…NTRI). Residues 464-489 (PAQSTSMGSGEQVMGPKYEPGDTSPH) form a disordered region.

Interacts with MYBS1. Expressed in aleurone cells, inflorescence shoot apical region, stamen primordia, and tapetum cells of the anther. Expressed at low level in roots and vegetative shoots.

The protein localises to the nucleus. In terms of biological role, transcriptional activator of gibberellin-dependent alpha-amylase expression in aleurone cells. Involved in pollen and floral organs development. May bind to the 5'-TAACAAA-3' box of alpha-amylase promoter. Required for anther development. Functions in parallel with UDT1 to regulate early anther development. Functions upstream of the transcription factor TDR and may positively regulate its transcription. Required for pollen development. Probably required for controlling tapetal cell size and promoting tapetal programmed cell death (PCD) during anther development. Required for exine and Ubisch body formation in anthers. Interacts with the DNA specific motifs of giberrellin-up-regulated genes of anthers and regulates their expression. Positively regulates the expression of the laurate hydroxylase CYP703A3, known to be essential for the development of pollen exine and anther epicuticular layer. Functions with MYBS1 to integrate diverse nutrient starvation and gibberellin (GA) signaling pathways during germination of grains. Sugar, nitrogen and phosphate starvation signals converge and interconnect with GA to promote the co-nuclear import of GAMYB and MYBS1, resulting in the expression of a large set of GA-inducible hydrolases, transporters and regulators that are essential for mobilization of nutrient reserves in the endosperm to support seedling growth. The polypeptide is Transcription factor GAMYB (Oryza sativa subsp. japonica (Rice)).